The following is a 458-amino-acid chain: Exodeoxyribonuclease 7 large subunit (458 aa).

The protein belongs to the XseA family. In terms of assembly, heterooligomer composed of large and small subunits.

It is found in the cytoplasm. It carries out the reaction Exonucleolytic cleavage in either 5'- to 3'- or 3'- to 5'-direction to yield nucleoside 5'-phosphates.. Functionally, bidirectionally degrades single-stranded DNA into large acid-insoluble oligonucleotides, which are then degraded further into small acid-soluble oligonucleotides. This chain is Exodeoxyribonuclease 7 large subunit, found in Halalkalibacterium halodurans (strain ATCC BAA-125 / DSM 18197 / FERM 7344 / JCM 9153 / C-125) (Bacillus halodurans).